Here is a 428-residue protein sequence, read N- to C-terminus: CinA-like protein (428 aa).

This sequence belongs to the CinA family.

This is CinA-like protein from Endomicrobium trichonymphae.